A 555-amino-acid polypeptide reads, in one-letter code: mRNA cleavage and polyadenylation factor CLP1 (555 aa).

ATP is bound by residues E30, K69, and 156-161 (YLGKTS). A disordered region spans residues 431 to 451 (DDFEHITNEDENGGDGNDGDG).

It belongs to the Clp1 family. Clp1 subfamily. Component of a pre-mRNA cleavage factor complex. Interacts directly with PCF11.

The protein localises to the nucleus. Its function is as follows. Required for endonucleolytic cleavage during polyadenylation-dependent pre-mRNA 3'-end formation. The protein is mRNA cleavage and polyadenylation factor CLP1 of Lodderomyces elongisporus (strain ATCC 11503 / CBS 2605 / JCM 1781 / NBRC 1676 / NRRL YB-4239) (Yeast).